The primary structure comprises 100 residues: Large ribosomal subunit protein uL23 (100 aa).

Belongs to the universal ribosomal protein uL23 family. Part of the 50S ribosomal subunit. Contacts protein L29, and trigger factor when it is bound to the ribosome.

One of the early assembly proteins it binds 23S rRNA. One of the proteins that surrounds the polypeptide exit tunnel on the outside of the ribosome. Forms the main docking site for trigger factor binding to the ribosome. This Shigella dysenteriae serotype 1 (strain Sd197) protein is Large ribosomal subunit protein uL23.